The chain runs to 318 residues: Vomeronasal type-1 receptor 45 (318 aa).

Over 1 to 32 (MSEILFFSPQPLFSHMMNKNSRLHTHSNIKNT) the chain is Extracellular. The chain crosses the membrane as a helical span at residues 33-53 (FFSEIGIGILGNSFLLLFHIL). The Cytoplasmic portion of the chain corresponds to 54-65 (KFIRGHRLRLTD). A helical membrane pass occupies residues 66–86 (LPIGLLSLIHLLMLLLMAFIA). Over 87-109 (TDIFISRRGWDDIICKFLVYLYR) the chain is Extracellular. C101 and C188 are oxidised to a cystine. The helical transmembrane segment at 110 to 130 (VLRGLSLCTTSMLSVLQAIIL) threads the bilayer. The Cytoplasmic portion of the chain corresponds to 131-150 (SPRSSCLAKLKHKYPHHISC). The chain crosses the membrane as a helical span at residues 151-171 (AIIFLSVLYMLISSHILLSII). Residues 172–206 (ATPNLTRNDFLYVTQSCSILPLSYVMQSMYSTLLA) are Extracellular-facing. A glycan (N-linked (GlcNAc...) asparagine) is linked at N175. Residues 207 to 227 (LREVFLISLMVLSTLYMVVLL) form a helical membrane-spanning segment. The Cytoplasmic segment spans residues 228–254 (CRHRKQAQHLQGTSLSPKASAEQRATQ). A helical transmembrane segment spans residues 255-275 (TILMLMTFFVLMSIFDSIVSC). The Extracellular portion of the chain corresponds to 276-285 (SRTMFLDDPT). Residues 286-306 (SYSIHIFVMHIYATVSPFVFM) form a helical membrane-spanning segment. Over 307–318 (STEKHIVNILRG) the chain is Cytoplasmic.

The protein belongs to the G-protein coupled receptor 1 family. Expressed in a subset of sensory neurons located in the apical layer of the vomeronasal organ.

It localises to the cell membrane. Its function is as follows. Putative pheromone receptor implicated in the regulation of social and reproductive behavior. The protein is Vomeronasal type-1 receptor 45 (Vmn1r45) of Mus musculus (Mouse).